We begin with the raw amino-acid sequence, 391 residues long: Aspartate aminotransferase (391 aa).

L-aspartate is bound by residues Gly-40 and Asn-176. Lys-236 is subject to N6-(pyridoxal phosphate)lysine. An L-aspartate-binding site is contributed by Arg-366.

Belongs to the class-I pyridoxal-phosphate-dependent aminotransferase family. Homodimer. Pyridoxal 5'-phosphate is required as a cofactor.

The protein localises to the cytoplasm. It catalyses the reaction L-aspartate + 2-oxoglutarate = oxaloacetate + L-glutamate. The protein is Aspartate aminotransferase (aspC) of Pyrococcus horikoshii (strain ATCC 700860 / DSM 12428 / JCM 9974 / NBRC 100139 / OT-3).